Reading from the N-terminus, the 146-residue chain is Snake venom vascular endothelial growth factor toxin TfsvVEGF (146 aa).

An N-terminal signal peptide occupies residues 1 to 24 (MAAYLLAVAILFCIQGWPSGTVQG). Glutamine 25 carries the post-translational modification Pyrrolidone carboxylic acid. 3 disulfides stabilise this stretch: cysteine 38/cysteine 80, cysteine 69/cysteine 115, and cysteine 73/cysteine 117. The segment covering 118-139 (RPRSPGDVNNGKDKRNPEEGGP) has biased composition (basic and acidic residues). A disordered region spans residues 118–146 (RPRSPGDVNNGKDKRNPEEGGPRARFPFV).

The protein belongs to the PDGF/VEGF growth factor family. Snake venom VEGF subfamily. Homodimer; disulfide-linked. Interacts with VEGF receptor-1 (FLT1) with a high affinity, whereas it binds to VEGF receptor-2 (KDR) with a low affinity. Does not bind VEGF receptor-3 (FLT4). As to expression, expressed by the venom gland.

The protein resides in the secreted. Functionally, snake venom VEGFs may contribute to venom dispersion and prey subjugation by inducing vascular permeability and hypotension. This protein strongly increases vascular permeability, and weakly stimulates angiogenesis. Interacts with VEGF receptor-1 (FLT1) with a high affinity, whereas it binds to VEGF receptor-2 (KDR) with a low affinity. Stimulates autophosphorylation of VEGF receptor-1 (VEGFR-1/FLT1), and VEGF receptor-2 (VEGFR-2/KDR). The chain is Snake venom vascular endothelial growth factor toxin TfsvVEGF from Protobothrops flavoviridis (Habu).